Here is a 235-residue protein sequence, read N- to C-terminus: Aspartate/glutamate leucyltransferase (235 aa).

Belongs to the R-transferase family. Bpt subfamily.

The protein localises to the cytoplasm. The enzyme catalyses N-terminal L-glutamyl-[protein] + L-leucyl-tRNA(Leu) = N-terminal L-leucyl-L-glutamyl-[protein] + tRNA(Leu) + H(+). The catalysed reaction is N-terminal L-aspartyl-[protein] + L-leucyl-tRNA(Leu) = N-terminal L-leucyl-L-aspartyl-[protein] + tRNA(Leu) + H(+). In terms of biological role, functions in the N-end rule pathway of protein degradation where it conjugates Leu from its aminoacyl-tRNA to the N-termini of proteins containing an N-terminal aspartate or glutamate. The sequence is that of Aspartate/glutamate leucyltransferase from Pseudomonas fluorescens (strain ATCC BAA-477 / NRRL B-23932 / Pf-5).